The primary structure comprises 151 residues: Large ribosomal subunit protein uL15 (151 aa).

The segment at 1 to 60 (MAENSPLKAHNLRPAPGAKTAKTRVGRGEASKGKTAGRGTKGTKARYQVPERFEGGQMPL) is disordered.

Belongs to the universal ribosomal protein uL15 family. As to quaternary structure, part of the 50S ribosomal subunit.

Binds to the 23S rRNA. This Streptomyces griseus subsp. griseus (strain JCM 4626 / CBS 651.72 / NBRC 13350 / KCC S-0626 / ISP 5235) protein is Large ribosomal subunit protein uL15.